The following is a 220-amino-acid chain: Thiopurine S-methyltransferase (220 aa).

Residues tryptophan 10, leucine 45, glutamate 66, and arginine 123 each contribute to the S-adenosyl-L-methionine site.

This sequence belongs to the class I-like SAM-binding methyltransferase superfamily. TPMT family.

It localises to the cytoplasm. The enzyme catalyses S-adenosyl-L-methionine + a thiopurine = S-adenosyl-L-homocysteine + a thiopurine S-methylether.. The protein is Thiopurine S-methyltransferase of Pseudomonas syringae pv. syringae (strain B728a).